The sequence spans 502 residues: MSTDATLSFEEAMEKYDPVLGFEVHVELNTKTKMFSSAPNVFGDEPNTNVNEVDLGMPGVLPVVNKTAIESSIKIGLALNCKIAETCRFARKNYFYPDTPKNFQTSQYDEPIAYDGYLDIELSDGTVFRVEIERAHMEEDAGKLTHMGGSAGRIQGADYSLVDYNRSGVPLVEIVTKPIQGAGSRAPELAKAYVAAVREIVKNLGVSDAKMERGNVRCDANVSLRPHGRERFGIRSETKNVNSLRAVEHAVRYEIQRHAAVLDSGEPVIQETRHWHEDTRSTTSGRAKSDADDYRYFPEPDLVPIVASREWVEELRATLPEPPAERRKRLQADWGYSDLEFRDVVNAGVMDEIEETIAAGATATVARKWWMGEIVGRAKNADVDPGQLGVKPETIVELNKMVEAGKINNKMAAEVLDGVLAGEGTPAEIVEKRGLAVVSDDGPLLEAIDAALAAQPDVADKIRGGKVQAIGAIVGGVMKATRGQADAGRVRELILERLGVEG.

It belongs to the GatB/GatE family. GatB subfamily. As to quaternary structure, heterotrimer of A, B and C subunits.

The catalysed reaction is L-glutamyl-tRNA(Gln) + L-glutamine + ATP + H2O = L-glutaminyl-tRNA(Gln) + L-glutamate + ADP + phosphate + H(+). It carries out the reaction L-aspartyl-tRNA(Asn) + L-glutamine + ATP + H2O = L-asparaginyl-tRNA(Asn) + L-glutamate + ADP + phosphate + 2 H(+). Its function is as follows. Allows the formation of correctly charged Asn-tRNA(Asn) or Gln-tRNA(Gln) through the transamidation of misacylated Asp-tRNA(Asn) or Glu-tRNA(Gln) in organisms which lack either or both of asparaginyl-tRNA or glutaminyl-tRNA synthetases. The reaction takes place in the presence of glutamine and ATP through an activated phospho-Asp-tRNA(Asn) or phospho-Glu-tRNA(Gln). This chain is Aspartyl/glutamyl-tRNA(Asn/Gln) amidotransferase subunit B, found in Arthrobacter sp. (strain FB24).